Here is a 201-residue protein sequence, read N- to C-terminus: Transcription factor MYB82 (201 aa).

HTH myb-type domains follow at residues 9–61 and 62–116; these read KSYV…KNYL and RPNI…NKKP. DNA-binding regions (H-T-H motif) lie at residues 37–61 and 89–112; these read WADISRRSGLKRGGKSCRLRWKNYL and WSLIAGRLPGRTDNEVKNYWNTHL. Positions 112-133 are disordered; the sequence is LNKKPNSRRQNAPESIVGATPF.

In terms of assembly, homodimer and heterodimer with GL1. Part of the WD40-bHLH-MYB complex. Interacts with BHLH012/MYC1 and BHLH042/TT8. Interacts (via N-terminus) with GL1 and GL3. Mainly expressed in the trichomes of new leaves.

The protein localises to the nucleus. Transcription activation factor positively regulating trichomes development. Has a function nearly equivalent to that of GL1 and can complement gl1 mutants. This chain is Transcription factor MYB82 (MYB82), found in Arabidopsis thaliana (Mouse-ear cress).